Reading from the N-terminus, the 396-residue chain is Phosphoglycerate kinase (396 aa).

Residues 21 to 23, Arg36, 59 to 62, Arg119, and Arg156 each bind substrate; these read DFN and HLGK. ATP is bound by residues Lys206, Gly294, Glu325, and 352 to 355; that span reads GGDS.

This sequence belongs to the phosphoglycerate kinase family. Monomer.

Its subcellular location is the cytoplasm. The enzyme catalyses (2R)-3-phosphoglycerate + ATP = (2R)-3-phospho-glyceroyl phosphate + ADP. It functions in the pathway carbohydrate degradation; glycolysis; pyruvate from D-glyceraldehyde 3-phosphate: step 2/5. The polypeptide is Phosphoglycerate kinase (Listeria welshimeri serovar 6b (strain ATCC 35897 / DSM 20650 / CCUG 15529 / CIP 8149 / NCTC 11857 / SLCC 5334 / V8)).